A 21-amino-acid polypeptide reads, in one-letter code: Phospholipase A2 crotoxin basic chain (21 aa).

This sequence belongs to the phospholipase A2 family. Group II subfamily. It depends on Ca(2+) as a cofactor. Expressed by the venom gland.

The protein localises to the secreted. It catalyses the reaction a 1,2-diacyl-sn-glycero-3-phosphocholine + H2O = a 1-acyl-sn-glycero-3-phosphocholine + a fatty acid + H(+). In terms of biological role, snake venom phospholipase A2 (PLA2) that induces a conspicuous local myotoxic effect and moderate footpad edema. In vitro, it shows anticoagulant effects and is not cytotoxic on myoblast but is able to lyse myotubes. PLA2 catalyzes the calcium-dependent hydrolysis of the 2-acyl groups in 3-sn-phosphoglycerides. This chain is Phospholipase A2 crotoxin basic chain, found in Crotalus durissus cumanensis (South American rattlesnake).